The chain runs to 445 residues: Tol-Pal system protein TolB (445 aa).

The signal sequence occupies residues 1–26; that stretch reads MLNRRNFIRTTSALAASTALPGYAFG.

This sequence belongs to the TolB family. The Tol-Pal system is composed of five core proteins: the inner membrane proteins TolA, TolQ and TolR, the periplasmic protein TolB and the outer membrane protein Pal. They form a network linking the inner and outer membranes and the peptidoglycan layer.

It is found in the periplasm. Part of the Tol-Pal system, which plays a role in outer membrane invagination during cell division and is important for maintaining outer membrane integrity. The chain is Tol-Pal system protein TolB from Jannaschia sp. (strain CCS1).